The primary structure comprises 577 residues: Beta-glucosidase 30 (577 aa).

Positions 1 to 23 (MAKGSWFFIILFIISMLENMINS) are cleaved as a signal peptide. Residues glutamine 45, histidine 148, and 193–194 (NE) contribute to the a beta-D-glucoside site. Glutamate 194 functions as the Proton donor in the catalytic mechanism. Cysteine 213 and cysteine 221 form a disulfide bridge. N-linked (GlcNAc...) asparagine glycosylation is present at asparagine 328. Residue tyrosine 338 coordinates a beta-D-glucoside. An N-linked (GlcNAc...) asparagine glycan is attached at asparagine 368. Residues glutamate 410, tryptophan 460, 467 to 468 (EW), and phenylalanine 476 contribute to the a beta-D-glucoside site. The active-site Nucleophile is the glutamate 410. N-linked (GlcNAc...) asparagine glycans are attached at residues asparagine 524 and asparagine 544.

Belongs to the glycosyl hydrolase 1 family.

The enzyme catalyses Hydrolysis of terminal, non-reducing beta-D-glucosyl residues with release of beta-D-glucose.. The polypeptide is Beta-glucosidase 30 (Arabidopsis thaliana (Mouse-ear cress)).